We begin with the raw amino-acid sequence, 82 residues long: UPF0235 protein Pden_2174 (82 aa).

The protein belongs to the UPF0235 family.

This is UPF0235 protein Pden_2174 from Paracoccus denitrificans (strain Pd 1222).